A 326-amino-acid chain; its full sequence is Transcription initiation factor IIB (326 aa).

The TFIIB-type zinc-finger motif lies at 26–57 (DVEVCPECGSPRLIRDYRRGEFICQDCGLVIE). Positions 30, 33, 49, and 52 each coordinate Zn(2+). A run of 2 repeats spans residues 143–226 (SELD…TREL) and 237–318 (DYIP…ELAE).

It belongs to the TFIIB family.

Stabilizes TBP binding to an archaeal box-A promoter. Also responsible for recruiting RNA polymerase II to the pre-initiation complex (DNA-TBP-TFIIB). This chain is Transcription initiation factor IIB, found in Archaeoglobus fulgidus (strain ATCC 49558 / DSM 4304 / JCM 9628 / NBRC 100126 / VC-16).